The primary structure comprises 465 residues: E3 ubiquitin-protein ligase TRIM15 (465 aa).

Residues 16–61 (CTLCVGPLEDAVTAPCGHTFCRLCLPTLSQMGAQSSGKILLCPLCQ) form an RING-type zinc finger. A B box-type zinc finger spans residues 78-119 (LGETYCEEHGEKIYFFCENDAEFLCVFCREGPTHQAHTVGFL). The Zn(2+) site is built by cysteine 83, histidine 86, cysteine 105, and histidine 111. Residues 126-229 (YRDRLRSRLE…VKELEEKCQQ (104 aa)) adopt a coiled-coil conformation. The region spanning 276–465 (EMMRMFSENL…KKGSCLTLKG (190 aa)) is the B30.2/SPRY domain.

Belongs to the TRIM/RBCC family. In terms of assembly, interacts with paxillin/PXN; this interaction recruits TRIM15 to focal adhesions. Interacts with TRIM8; this interaction prevents TRIM8 cytoplasmic translocation.

It is found in the cytoplasm. The protein resides in the nucleus. It localises to the cell junction. Its subcellular location is the focal adhesion. The catalysed reaction is S-ubiquitinyl-[E2 ubiquitin-conjugating enzyme]-L-cysteine + [acceptor protein]-L-lysine = [E2 ubiquitin-conjugating enzyme]-L-cysteine + N(6)-ubiquitinyl-[acceptor protein]-L-lysine.. In terms of biological role, E3 ubiquitin ligase that plays a role in several processes including innate antiviral immnity, cell migration and chemotaxis. Acts as a 'Lys-63'-specific ubiquitin ligase for MAPK1/ERK2 and MAPK3/ERK1, promoting their activation by facilitating their interaction with MAP2K1 and MAP2K2. Also plays a role in cell migration and chemotaxis by acting as a stable focal adhesion component upon recruitment by multi-adapter protein paxillin/PXN. Functions in the RIGI-mediated interferon induction pathway upstream or at the level of MAVS. Inhibits NF-kappa-B activation by turnover of 'Lys-63'-linked ubiquitination of MAP3K7/TAK1. Mechanistically, prevents TRIM8 cytoplasmic translocation and thus inhibits TRIM8-mediated 'Lys-63'-linked polyubiquitination of MAP3K7/TAK1 in the cytoplasm. Also has an important regulatory effect on the activation of hepatic stellate cells (HSCs). In Macaca mulatta (Rhesus macaque), this protein is E3 ubiquitin-protein ligase TRIM15 (TRIM15).